A 136-amino-acid chain; its full sequence is Large ribosomal subunit protein uL16c (136 aa).

This sequence belongs to the universal ribosomal protein uL16 family. Part of the 50S ribosomal subunit.

It localises to the plastid. Its subcellular location is the chloroplast. The sequence is that of Large ribosomal subunit protein uL16c from Oryza nivara (Indian wild rice).